Reading from the N-terminus, the 513-residue chain is Serine/threonine-protein kinase ppk8 (513 aa).

The segment covering 98–114 has biased composition (low complexity); that stretch reads LSSTLTSMSEESSSTES. The disordered stretch occupies residues 98–120; sequence LSSTLTSMSEESSSTESKFATLN. The Protein kinase domain occupies 241–505; sequence GKLNNVIGEG…ISGARSTTWM (265 aa). Residues 247–255 and Lys270 each bind ATP; that span reads IGEGASSFI. The Proton acceptor role is filled by Asp364.

Belongs to the protein kinase superfamily. Ser/Thr protein kinase family.

It is found in the cytoplasm. The protein localises to the nucleus. It carries out the reaction L-seryl-[protein] + ATP = O-phospho-L-seryl-[protein] + ADP + H(+). The enzyme catalyses L-threonyl-[protein] + ATP = O-phospho-L-threonyl-[protein] + ADP + H(+). In Schizosaccharomyces pombe (strain 972 / ATCC 24843) (Fission yeast), this protein is Serine/threonine-protein kinase ppk8 (ppk8).